The sequence spans 812 residues: Probable inorganic carbon transporter subunit DabA (812 aa).

Zn(2+)-binding residues include C338, D340, H498, and C513.

Belongs to the inorganic carbon transporter (TC 9.A.2) DabA family. In terms of assembly, forms a complex with DabB. Zn(2+) serves as cofactor.

Its subcellular location is the cell inner membrane. Part of an energy-coupled inorganic carbon pump. The protein is Probable inorganic carbon transporter subunit DabA of Methylobacterium sp. (strain 4-46).